The chain runs to 210 residues: Germin-like protein subfamily 3 member 4 (210 aa).

A signal peptide spans 1-18 (MKFFVVIVFCAIFLSVSG). C27 and C44 are joined by a disulfide. The Cupin type-1 domain occupies 58-190 (TKLTEAGDTD…VFGIDQEHIK (133 aa)). N-linked (GlcNAc...) asparagine glycosylation is present at N73. Positions 106, 108, 113, and 152 each coordinate Mn(2+).

This sequence belongs to the germin family. As to quaternary structure, oligomer (believed to be a pentamer but probably hexamer).

It is found in the secreted. It localises to the extracellular space. Its subcellular location is the apoplast. Functionally, may play a role in plant defense. Probably has no oxalate oxidase activity even if the active site is conserved. The sequence is that of Germin-like protein subfamily 3 member 4 from Arabidopsis thaliana (Mouse-ear cress).